Reading from the N-terminus, the 215-residue chain is Ceramide-1-phosphate transfer protein (215 aa).

The an N-acylsphingoid base 1-phosphate site is built by Asp57, Lys61, Arg107, Arg111, and His151.

It belongs to the GLTP family.

It is found in the cytoplasm. The protein resides in the cytosol. The protein localises to the golgi apparatus. Its subcellular location is the trans-Golgi network membrane. It localises to the cell membrane. It is found in the endosome membrane. The protein resides in the nucleus outer membrane. It carries out the reaction N-(hexadecanoyl)-sphing-4-enine-1-phosphate(in) = N-(hexadecanoyl)-sphing-4-enine-1-phosphate(out). The catalysed reaction is N-(9Z-octadecenoyl)-sphing-4-enine-1-phosphate(in) = N-(9Z-octadecenoyl)-sphing-4-enine-1-phosphate(out). Mediates the intracellular transfer of ceramide-1-phosphate (C1P) between organelle membranes and the cell membrane. Required for normal structure of the Golgi stacks. Can bind phosphoceramides with a variety of aliphatic chains, but has a preference for lipids with saturated C16:0 or monounsaturated C18:1 aliphatic chains, and is inefficient with phosphoceramides containing lignoceryl (C24:0). Plays a role in the regulation of the cellular levels of ceramide-1-phosphate, and thereby contributes to the regulation of phospholipase PLA2G4A activity and the release of arachidonic acid. Has no activity with galactosylceramide, lactosylceramide, sphingomyelin, phosphatidylcholine, phosphatidic acid and ceramide. C1P transfer is stimulated by phosphatidylserine in C1P source vesicles. Regulates autophagy and pyroptosis, but not apoptosis. The polypeptide is Ceramide-1-phosphate transfer protein (cptp) (Xenopus tropicalis (Western clawed frog)).